The following is a 393-amino-acid chain: MSEQTQTCASEIQATNVAVQHPKSEKINLMNLTRQEMRELFAEMGEKPFRADQLMKWIYHFGEDNFDNMSNINKVLREKLKQIAEIKAPEVSVEQRSSDGTIKWAMQVGDQQIETVYIPEDDRATLCVSSQVGCALACKFCSTAQQGFNRNLTVSEIIGQVWRASKIIGNFGVTGVRPITNVVMMGMGEPLLNLNNVIPAMEIMLDDFAYGLSKRRVTLSTAGVVPALDIMREKIDVALAISLHAPNDELRDEIMPINKKYNIKMLMDSVHKYLEVSNANHGKVTIEYVLLDHVNDGTEHAHQLAEVLKNTPCKINLIPWNPFPEAPYGKSSNSRVDRFQKTLMEYGFTVIVRKTRGDDIDAACGQLAGDVIDRTKRTMEKRKFGKGIAVQNH.

Residue E114 is the Proton acceptor of the active site. In terms of domain architecture, Radical SAM core spans 120–359 (EDDRATLCVS…VIVRKTRGDD (240 aa)). C127 and C364 are oxidised to a cystine. Residues C134, C138, and C141 each coordinate [4Fe-4S] cluster. Residues 188 to 189 (GE), S220, 242 to 244 (SLH), and N321 each bind S-adenosyl-L-methionine. C364 functions as the S-methylcysteine intermediate in the catalytic mechanism.

The protein belongs to the radical SAM superfamily. RlmN family. [4Fe-4S] cluster is required as a cofactor.

The protein resides in the cytoplasm. It catalyses the reaction adenosine(2503) in 23S rRNA + 2 reduced [2Fe-2S]-[ferredoxin] + 2 S-adenosyl-L-methionine = 2-methyladenosine(2503) in 23S rRNA + 5'-deoxyadenosine + L-methionine + 2 oxidized [2Fe-2S]-[ferredoxin] + S-adenosyl-L-homocysteine. The enzyme catalyses adenosine(37) in tRNA + 2 reduced [2Fe-2S]-[ferredoxin] + 2 S-adenosyl-L-methionine = 2-methyladenosine(37) in tRNA + 5'-deoxyadenosine + L-methionine + 2 oxidized [2Fe-2S]-[ferredoxin] + S-adenosyl-L-homocysteine. Its function is as follows. Specifically methylates position 2 of adenine 2503 in 23S rRNA and position 2 of adenine 37 in tRNAs. m2A2503 modification seems to play a crucial role in the proofreading step occurring at the peptidyl transferase center and thus would serve to optimize ribosomal fidelity. This chain is Dual-specificity RNA methyltransferase RlmN, found in Actinobacillus pleuropneumoniae serotype 3 (strain JL03).